The sequence spans 257 residues: Nickel import system ATP-binding protein NikD (257 aa).

An ABC transporter domain is found at 4 to 245 (IDIQNLTIKN…HLHPYTERLI (242 aa)). Residue 37–44 (GESGAGKS) participates in ATP binding.

This sequence belongs to the ABC transporter superfamily. The complex is composed of two ATP-binding proteins (NikD and NikE), two transmembrane proteins (NikB and NikC) and a solute-binding protein (NikA).

The protein resides in the cell membrane. It carries out the reaction Ni(2+)(out) + ATP + H2O = Ni(2+)(in) + ADP + phosphate + H(+). In terms of biological role, part of the ABC transporter complex NikABCDE (Opp2) involved in nickel import. Probably responsible for energy coupling to the transport system. The protein is Nickel import system ATP-binding protein NikD of Staphylococcus aureus (strain MSSA476).